The following is a 456-amino-acid chain: Peripherin (456 aa).

A compositionally biased stretch (polar residues) spans 1–14; it reads MSHSGLRSTSTSYR. Residues 1–55 form a disordered region; that stretch reads MSHSGLRSTSTSYRRTLGSSPVPSSYSSSSRLSTSRHFGSPSPGPSSRSSSSAFR. The interval 1–90 is head; sequence MSHSGLRSTS…FLTTRSNEKA (90 aa). The span at 16–55 shows a compositional bias: low complexity; that stretch reads TLGSSPVPSSYSSSSRLSTSRHFGSPSPGPSSRSSSSAFR. The IF rod domain occupies 88 to 397; it reads EKAELQELND…KLLEGEESRI (310 aa). The tract at residues 91-123 is coil 1A; sequence ELQELNDRFASFIEKVRYLEQQNAVLVTEINQA. The tract at residues 124–134 is linker 1; that stretch reads RSKEPTRASDL. Positions 135–230 are coil 1B; sequence CQQELRELRK…KLHEEELNDV (96 aa). Residues 231–252 are linker 2; it reads QVSVQAQPVHMEIEAAKQPDLT. Positions 253 to 395 are coil 2; that stretch reads SALRDIRSQY…YRKLLEGEES (143 aa). Positions 396–456 are tail; it reads RIAVPIHSLT…RKEQSSEGEK (61 aa). Positions 411–456 are disordered; the sequence is SPAAPEIDPSTETHTRKTVAIKTIETRDGEQVVTESRKEQSSEGEK. Basic and acidic residues predominate over residues 434-456; it reads IETRDGEQVVTESRKEQSSEGEK.

This sequence belongs to the intermediate filament family. As to quaternary structure, forms homodimers (in vitro). Homopolymerizes into a filamentous network (in vitro).

It localises to the cytoplasm. The protein localises to the cytoskeleton. It is found in the cell projection. Its subcellular location is the axon. The protein resides in the perikaryon. Its function is as follows. Class-III neuronal intermediate filament protein. My form an independent structural network without the involvement of other neurofilaments or may cooperate with other neuronal intermediate filament proteins to form a filamentous network. This is Peripherin (prph) from Xenopus laevis (African clawed frog).